A 241-amino-acid chain; its full sequence is Probable 2-phosphosulfolactate phosphatase (241 aa).

It belongs to the ComB family. Mg(2+) serves as cofactor.

It catalyses the reaction (2R)-O-phospho-3-sulfolactate + H2O = (2R)-3-sulfolactate + phosphate. This Deinococcus geothermalis (strain DSM 11300 / CIP 105573 / AG-3a) protein is Probable 2-phosphosulfolactate phosphatase.